The primary structure comprises 247 residues: tRNA pseudouridine synthase A (247 aa).

D52 serves as the catalytic Nucleophile. Y113 contributes to the substrate binding site.

It belongs to the tRNA pseudouridine synthase TruA family. In terms of assembly, homodimer.

The enzyme catalyses uridine(38/39/40) in tRNA = pseudouridine(38/39/40) in tRNA. In terms of biological role, formation of pseudouridine at positions 38, 39 and 40 in the anticodon stem and loop of transfer RNAs. In Sinorhizobium medicae (strain WSM419) (Ensifer medicae), this protein is tRNA pseudouridine synthase A.